A 941-amino-acid polypeptide reads, in one-letter code: Protein translocase subunit SecA (941 aa).

ATP contacts are provided by residues Gln87, 105–109 (GEGKT), and Asp524. The segment at 871 to 919 (DEQPPMPAMEAHKLDPNTGEDQVAQAQSGLAPVAPAKRDPANPATWGKV) is disordered. Residues Cys925, Cys927, Cys936, and His937 each coordinate Zn(2+).

Belongs to the SecA family. As to quaternary structure, monomer and homodimer. Part of the essential Sec protein translocation apparatus which comprises SecA, SecYEG and auxiliary proteins SecDF-YajC and YidC. Requires Zn(2+) as cofactor.

It is found in the cell inner membrane. It localises to the cytoplasm. The enzyme catalyses ATP + H2O + cellular proteinSide 1 = ADP + phosphate + cellular proteinSide 2.. Functionally, part of the Sec protein translocase complex. Interacts with the SecYEG preprotein conducting channel. Has a central role in coupling the hydrolysis of ATP to the transfer of proteins into and across the cell membrane, serving both as a receptor for the preprotein-SecB complex and as an ATP-driven molecular motor driving the stepwise translocation of polypeptide chains across the membrane. This chain is Protein translocase subunit SecA, found in Afipia carboxidovorans (strain ATCC 49405 / DSM 1227 / KCTC 32145 / OM5) (Oligotropha carboxidovorans).